The chain runs to 147 residues: Leghemoglobin 3 (147 aa).

One can recognise a Globin domain in the interval 2–147; that stretch reads GFTAQQEALV…LATAIKKAMG (146 aa). At Tyr30 the chain carries Nitrated tyrosine. Residue Ser45 coordinates heme b. At Ser45 the chain carries Phosphoserine. His61 contributes to the O2 binding site. The heme b site is built by Lys64, His93, and Lys96. Residue Tyr135 is modified to Nitrated tyrosine.

Belongs to the plant globin family. As to quaternary structure, monomer. Nitrated in effective nodules and particularly in hypoxic conditions; this mechanism may play a protective role in the symbiosis by buffering toxic peroxynitrite NO(2)(-). Nitration level decrease during nodule senescence. Post-translationally, phosphorylation at Ser-45 disrupts the molecular environment of its porphyrin ring oxygen binding pocket, thus leading to a reduced oxygen consumption and to the delivery of oxygen O(2) to symbiosomes. In terms of tissue distribution, specifically and strongly expressed in root nodules and at low levels in seedlings.

It localises to the cytoplasm. The protein localises to the cytosol. Its subcellular location is the nucleus. Leghemoglobin that reversibly binds oxygen O(2) through a pentacoordinated heme iron. In root nodules, facilitates the diffusion of oxygen to the bacteroids while preventing the bacterial nitrogenase from being inactivated by buffering dioxygen, nitric oxide and carbon monoxide, and promoting the formation of reactive oxygen species (ROS, e.g. H(2)O(2)). This role is essential for symbiotic nitrogen fixation (SNF). This chain is Leghemoglobin 3, found in Lotus japonicus (Lotus corniculatus var. japonicus).